The chain runs to 514 residues: 1-pyrroline-5-carboxylate dehydrogenase (514 aa).

Residues E286 and C320 contribute to the active site.

Belongs to the aldehyde dehydrogenase family. RocA subfamily.

It carries out the reaction L-glutamate 5-semialdehyde + NAD(+) + H2O = L-glutamate + NADH + 2 H(+). The protein operates within amino-acid degradation; L-proline degradation into L-glutamate; L-glutamate from L-proline: step 2/2. The sequence is that of 1-pyrroline-5-carboxylate dehydrogenase from Staphylococcus epidermidis (strain ATCC 12228 / FDA PCI 1200).